The sequence spans 654 residues: Threonine--tRNA ligase (654 aa).

The 63-residue stretch at Met-1–Ala-63 folds into the TGS domain. Residues Asp-248 to Pro-546 are catalytic. 3 residues coordinate Zn(2+): Cys-342, His-393, and His-523.

The protein belongs to the class-II aminoacyl-tRNA synthetase family. In terms of assembly, homodimer. Requires Zn(2+) as cofactor.

Its subcellular location is the cytoplasm. It catalyses the reaction tRNA(Thr) + L-threonine + ATP = L-threonyl-tRNA(Thr) + AMP + diphosphate + H(+). In terms of biological role, catalyzes the attachment of threonine to tRNA(Thr) in a two-step reaction: L-threonine is first activated by ATP to form Thr-AMP and then transferred to the acceptor end of tRNA(Thr). Also edits incorrectly charged L-seryl-tRNA(Thr). The sequence is that of Threonine--tRNA ligase from Lactiplantibacillus plantarum (strain ATCC BAA-793 / NCIMB 8826 / WCFS1) (Lactobacillus plantarum).